The primary structure comprises 428 residues: Somatostatin receptor type 3 (428 aa).

A compositionally biased stretch (polar residues) spans 1–12; it reads MATVTYPSSEPT. The disordered stretch occupies residues 1–20; that stretch reads MATVTYPSSEPTTLDPGNAS. The Extracellular portion of the chain corresponds to 1–45; that stretch reads MATVTYPSSEPTTLDPGNASSTWPLDTTLGNTSAGASLTGLAVSG. Asn-18 and Asn-31 each carry an N-linked (GlcNAc...) asparagine glycan. Residues 46-71 traverse the membrane as a helical segment; it reads ILISLVYLVVCVVGLLGNSLVIYVVL. The Cytoplasmic portion of the chain corresponds to 72-81; the sequence is RHTSSPSVTS. Residues 82–103 traverse the membrane as a helical segment; it reads VYILNLALADELFMLGLPFLAA. Residues 104–118 are Extracellular-facing; the sequence is QNALSYWPFGSLMCR. The cysteines at positions 117 and 192 are disulfide-linked. Residues 119–140 form a helical membrane-spanning segment; the sequence is LVMAVDGINQFTSIFCLTVMSV. Residues 141 to 162 lie on the Cytoplasmic side of the membrane; that stretch reads DRYLAVVHPTRSARWRTAPVAR. The chain crosses the membrane as a helical span at residues 163–182; sequence TVSAAVWVASAVVVLPVVVF. The Extracellular segment spans residues 183–206; it reads SGVPRGMSTCHMQWPEPAAAWRTA. A helical transmembrane segment spans residues 207-232; the sequence is FIIYTAALGFFGPLLVICLCYLLIVV. Residues 233 to 266 lie on the Cytoplasmic side of the membrane; that stretch reads KVRSTTRRVRAPSCQWVQAPACQRRRRSERRVTR. A helical membrane pass occupies residues 267–288; the sequence is MVVAVVALFVLCWMPFYLLNIV. Over 289 to 302 the chain is Extracellular; that stretch reads NVVCPLPEEPAFFG. Residues 303 to 325 form a helical membrane-spanning segment; that stretch reads LYFLVVALPYANSCANPILYGFL. The Cytoplasmic segment spans residues 326–428; the sequence is SYRFKQGFRR…GDKASTLSHL (103 aa). A phosphoserine mark is found at Ser-341, Ser-346, and Ser-351. The tract at residues 344-428 is disordered; it reads IRSQEPGSGP…GDKASTLSHL (85 aa). Thr-357 is modified (phosphothreonine). The span at 357 to 370 shows a compositional bias: acidic residues; that stretch reads TEEEEDEEEEERRE. Polar residues predominate over residues 385–412; sequence RLSQIAQAGTSGQQPRPCTGTAKEQQLL.

Belongs to the G-protein coupled receptor 1 family. Homodimer and heterodimer with SSTR2. Heterodimerization with SSTR2 inactivates SSTR3 receptor function. In terms of processing, phosphorylated. Phosphorylation increases upon somatostatin binding. In the brain, primarily observed in the forebrain. Moderate levels found throughout laminae 2-6 of the neocortex and allocortex, and high levels in lamina 2 of the piriform and entorhinal cortices. High levels also present in the cornu ammonis fields of the hippocampus. In the amygdala, highly expressed in the nucleus of the lateral olfactory tract with expression also detected in the rostral portions of the basal magnocellular and lateral nuclei. In the diencephalon, moderate levels observed in the ventromedial and arcuate nuclei of the hypothalamus. In the midbrain, moderate levels found in the lateral portion of the substantia nigra pars reticulata.

Its subcellular location is the cell membrane. Receptor for somatostatin-14 and -28. This receptor is coupled via pertussis toxin sensitive G proteins to inhibition of adenylyl cyclase. This is Somatostatin receptor type 3 (Sstr3) from Mus musculus (Mouse).